We begin with the raw amino-acid sequence, 74 residues long: UPF0291 protein EF_0064 (74 aa).

The segment at 53 to 74 (YDPTGEDVTPEKLKEEQQKYFD) is disordered. Over residues 61–74 (TPEKLKEEQQKYFD) the composition is skewed to basic and acidic residues.

Belongs to the UPF0291 family.

It is found in the cytoplasm. This chain is UPF0291 protein EF_0064, found in Enterococcus faecalis (strain ATCC 700802 / V583).